A 455-amino-acid polypeptide reads, in one-letter code: 3-phosphoshikimate 1-carboxyvinyltransferase (455 aa).

The span at 1-19 (MSHGASSRPATARKSSGLS) shows a compositional bias: polar residues. The interval 1 to 25 (MSHGASSRPATARKSSGLSGTVRIP) is disordered. Residue lysine 28 coordinates phosphoenolpyruvate. The 3-phosphoshikimate site is built by serine 29 and arginine 33. Residue arginine 128 participates in phosphoenolpyruvate binding. 3-phosphoshikimate-binding residues include serine 173, alanine 174, glutamine 175, aspartate 326, and lysine 353. Glutamine 175 is a phosphoenolpyruvate binding site. Residue aspartate 326 is the Proton acceptor of the active site. Positions 357 and 405 each coordinate phosphoenolpyruvate.

It belongs to the EPSP synthase family. Monomer.

The protein localises to the cytoplasm. The enzyme catalyses 3-phosphoshikimate + phosphoenolpyruvate = 5-O-(1-carboxyvinyl)-3-phosphoshikimate + phosphate. It functions in the pathway metabolic intermediate biosynthesis; chorismate biosynthesis; chorismate from D-erythrose 4-phosphate and phosphoenolpyruvate: step 6/7. With respect to regulation, is resistant to inhibition by glyphosate (glyphosate-tolerant) like other members of class II EPSPS, in contrast to class I EPSPS, which is glyphosate-sensitive. Is much less sensitive to inhibition by the (R)-difluoromethyl and (R)-phosphonate analogs of the tetrahedral reaction intermediate than the representative class I EPSPS from E.coli. Is highly activated in the presence of cations, such as NH4(+), Rb(+), and K(+). Functionally, catalyzes the transfer of the enolpyruvyl moiety of phosphoenolpyruvate (PEP) to the 5-hydroxyl of shikimate-3-phosphate (S3P) to produce enolpyruvyl shikimate-3-phosphate and inorganic phosphate. This chain is 3-phosphoshikimate 1-carboxyvinyltransferase, found in Agrobacterium sp. (strain CP4).